Here is a 243-residue protein sequence, read N- to C-terminus: Phosphatidylserine decarboxylase proenzyme (243 aa).

The Schiff-base intermediate with substrate; via pyruvic acid role is filled by S212. A Pyruvic acid (Ser); by autocatalysis modification is found at S212.

Belongs to the phosphatidylserine decarboxylase family. PSD-A subfamily. In terms of assembly, heterodimer of a large membrane-associated beta subunit and a small pyruvoyl-containing alpha subunit. Pyruvate serves as cofactor. Is synthesized initially as an inactive proenzyme. Formation of the active enzyme involves a self-maturation process in which the active site pyruvoyl group is generated from an internal serine residue via an autocatalytic post-translational modification. Two non-identical subunits are generated from the proenzyme in this reaction, and the pyruvate is formed at the N-terminus of the alpha chain, which is derived from the carboxyl end of the proenzyme. The post-translation cleavage follows an unusual pathway, termed non-hydrolytic serinolysis, in which the side chain hydroxyl group of the serine supplies its oxygen atom to form the C-terminus of the beta chain, while the remainder of the serine residue undergoes an oxidative deamination to produce ammonia and the pyruvoyl prosthetic group on the alpha chain.

It localises to the cell membrane. It catalyses the reaction a 1,2-diacyl-sn-glycero-3-phospho-L-serine + H(+) = a 1,2-diacyl-sn-glycero-3-phosphoethanolamine + CO2. The protein operates within phospholipid metabolism; phosphatidylethanolamine biosynthesis; phosphatidylethanolamine from CDP-diacylglycerol: step 2/2. Its function is as follows. Catalyzes the formation of phosphatidylethanolamine (PtdEtn) from phosphatidylserine (PtdSer). The sequence is that of Phosphatidylserine decarboxylase proenzyme from Mycobacterium leprae (strain Br4923).